The primary structure comprises 122 residues: Probable dihydroneopterin aldolase (122 aa).

Residues glutamate 21, tyrosine 54, and leucine 73–glutamate 74 each bind substrate. Lysine 101 acts as the Proton donor/acceptor in catalysis.

The protein belongs to the DHNA family.

It catalyses the reaction 7,8-dihydroneopterin = 6-hydroxymethyl-7,8-dihydropterin + glycolaldehyde. It participates in cofactor biosynthesis; tetrahydrofolate biosynthesis; 2-amino-4-hydroxy-6-hydroxymethyl-7,8-dihydropteridine diphosphate from 7,8-dihydroneopterin triphosphate: step 3/4. In terms of biological role, catalyzes the conversion of 7,8-dihydroneopterin to 6-hydroxymethyl-7,8-dihydropterin. The polypeptide is Probable dihydroneopterin aldolase (folB) (Chlamydia muridarum (strain MoPn / Nigg)).